The sequence spans 446 residues: Adenylosuccinate synthetase (446 aa).

GTP contacts are provided by residues 20 to 26 (GDEGKGK) and 48 to 50 (GHT). The active-site Proton acceptor is aspartate 21. The Mg(2+) site is built by aspartate 21 and glycine 48. IMP is bound by residues 21 to 24 (DEGK), 46 to 49 (NAGH), threonine 137, arginine 151, glutamine 232, threonine 247, and arginine 319. Histidine 49 acts as the Proton donor in catalysis. 315-321 (SVTGRPR) is a substrate binding site. GTP-binding positions include arginine 321, 347 to 349 (KLD), and 429 to 431 (STG).

The protein belongs to the adenylosuccinate synthetase family. As to quaternary structure, homodimer. Mg(2+) is required as a cofactor.

It is found in the cytoplasm. It catalyses the reaction IMP + L-aspartate + GTP = N(6)-(1,2-dicarboxyethyl)-AMP + GDP + phosphate + 2 H(+). The protein operates within purine metabolism; AMP biosynthesis via de novo pathway; AMP from IMP: step 1/2. In terms of biological role, plays an important role in the de novo pathway of purine nucleotide biosynthesis. Catalyzes the first committed step in the biosynthesis of AMP from IMP. The sequence is that of Adenylosuccinate synthetase from Ralstonia pickettii (strain 12J).